A 409-amino-acid chain; its full sequence is Beta-arrestin-2 (409 aa).

Tyr48 carries the post-translational modification Phosphotyrosine. 2 positions are modified to hydroxyproline; by PHD2: Pro176 and Pro181. Positions 240–409 (ADICLFSTAQ…KDDDYDDQLC (170 aa)) are interaction with TRAF6. At Ser360 the chain carries Phosphoserine. Positions 363–409 (PETDVPVDTNLIEFDTNYATDDDIVFEDFARLRLKGMKDDDYDDQLC) are interaction with AP2B1. Thr382 carries the post-translational modification Phosphothreonine. A [DE]-X(1,2)-F-X-X-[FL]-X-X-X-R motif motif is present at residues 385–395 (DIVFEDFARLR).

This sequence belongs to the arrestin family. Homooligomer; the self-association is mediated by InsP6-binding. Heterooligomer with ARRB1; the association is mediated by InsP6-binding. Interacts with ADRB2 and CHRM2. Interacts with PDE4A. Interacts with PDE4D. Interacts with MAPK10, MAPK1 and MAPK3. Interacts with DRD2. Interacts with FSHR. Interacts with CLTC. Interacts with HTR2C. Interacts with CCR5. Interacts with CXCR4. Interacts with SRC. Interacts with DUSP16; the interaction is interrupted by stimulation of AGTR1 and activation of MAPK10. Interacts with CHUK; the interaction is enhanced stimulation of ADRB2. Interacts with RELA. Interacts with MDM2; the interaction is enhanced by activation of GPCRs. Interacts with SLC9A5. Interacts with TRAF6. Interacts with IGF1R. Interacts with ENG. Interacts with KIR2DL1, KIR2DL3 and KIR2DL4. Interacts with LDLR. Interacts with AP2B1. Interacts with C5AR1. Interacts with RAF1. Interacts with MAP2K1. Interacts with MAPK1. Interacts with MAPK10; the interaction enhances MAPK10 activation by MAP3K5. Interacts with MAP2K4; the interaction is enhanced by presence of MAP3K5 and MAPK10. Interacts with MAP3K5. Interacts with AKT1. Interacts with IKBKB and MAP3K14. Interacts with SMO (activated). Interacts with GSK3A and GSK3B. Associates with protein phosphatase 2A (PP2A). Interacts with DHX8; the interaction is detected in the nucleus upon OR1D2 stimulation. Interacts with GAPDHS; the interaction is detected in the nucleus upon OR1D2 stimulation. Interacts with H2AFX; the interaction is detected in the nucleus upon OR1D2 stimulation. Interacts with KIF14; the interaction is detected in the nucleus upon OR1D2 stimulation. Interacts with RCC1; the interaction is detected in the nucleus upon OR1D2 stimulation. Interacts with CXCR4; the interaction is dependent on C-terminal phosphorylation of CXCR4 and allows activation of MAPK1 and MAPK3. Interacts with GPR143. Interacts with HCK and CXCR1 (phosphorylated). Interacts with ACKR3 and ACKR4. Interacts with ARRDC1; the interaction is direct. Interacts with GPR61, GPR62 and GPR135. Interacts (via NACHT and LRR domains) with NLRP3; this interaction is direct and inducible by omega-3 polyunsaturated fatty acids (PUFAs). Interacts with FFAR4 (via C-terminus); this interaction is stimulated by long-chain fatty acids (LCFAs). Interacts with GPR35. Interacts with GPR84. Interacts with TIGIT; this interaction inhibits the NF-kappa-B pathway. Interacts with TGFBR3. In terms of processing, phosphorylated at Thr-382 in the cytoplasm; probably dephosphorylated at the plasma membrane. The phosphorylation does not regulate internalization and recycling of ADRB2, interaction with clathrin or AP2B1. The ubiquitination status appears to regulate the formation and trafficking of beta-arrestin-GPCR complexes and signaling. Ubiquitination appears to occur GPCR-specific. Ubiquitinated by MDM2; the ubiquitination is required for rapid internalization of ADRB2. Deubiquitinated by USP33; the deubiquitination leads to a dissociation of the beta-arrestin-GPCR complex. Stimulation of a class A GPCR, such as ADRB2, induces transient ubiquitination and subsequently promotes association with USP33. Stimulation of a class B GPCR promotes a sustained ubiquitination. Deubiquitinated by USP20; allowing USP20 to deubiquitinate TRAF6 leading to inhibition of NF-kappa-B signaling. Post-translationally, hydroxylation by PHD2 modulates the rate of internalization by slowing down recruitment to the plasma membrane and inhibiting subsequent co-internalization with class A receptors.

Its subcellular location is the cytoplasm. The protein localises to the nucleus. It localises to the cell membrane. The protein resides in the membrane. It is found in the clathrin-coated pit. Its subcellular location is the cytoplasmic vesicle. Functions in regulating agonist-mediated G-protein coupled receptor (GPCR) signaling by mediating both receptor desensitization and resensitization processes. During homologous desensitization, beta-arrestins bind to the GPRK-phosphorylated receptor and sterically preclude its coupling to the cognate G-protein; the binding appears to require additional receptor determinants exposed only in the active receptor conformation. The beta-arrestins target many receptors for internalization by acting as endocytic adapters (CLASPs, clathrin-associated sorting proteins) and recruiting the GPRCs to the adapter protein 2 complex 2 (AP-2) in clathrin-coated pits (CCPs). However, the extent of beta-arrestin involvement appears to vary significantly depending on the receptor, agonist and cell type. Internalized arrestin-receptor complexes traffic to intracellular endosomes, where they remain uncoupled from G-proteins. Two different modes of arrestin-mediated internalization occur. Class A receptors, like ADRB2, OPRM1, ENDRA, D1AR and ADRA1B dissociate from beta-arrestin at or near the plasma membrane and undergo rapid recycling. Class B receptors, like AVPR2, AGTR1, NTSR1, TRHR and TACR1 internalize as a complex with arrestin and traffic with it to endosomal vesicles, presumably as desensitized receptors, for extended periods of time. Receptor resensitization then requires that receptor-bound arrestin is removed so that the receptor can be dephosphorylated and returned to the plasma membrane. Mediates endocytosis of CCR7 following ligation of CCL19 but not CCL21. Involved in internalization of P2RY1, P2RY4, P2RY6 and P2RY11 and ATP-stimulated internalization of P2RY2. Involved in phosphorylation-dependent internalization of OPRD1 and subsequent recycling or degradation. Involved in ubiquitination of IGF1R. Beta-arrestins function as multivalent adapter proteins that can switch the GPCR from a G-protein signaling mode that transmits short-lived signals from the plasma membrane via small molecule second messengers and ion channels to a beta-arrestin signaling mode that transmits a distinct set of signals that are initiated as the receptor internalizes and transits the intracellular compartment. Acts as a signaling scaffold for MAPK pathways such as MAPK1/3 (ERK1/2) and MAPK10 (JNK3). ERK1/2 and JNK3 activated by the beta-arrestin scaffold are largely excluded from the nucleus and confined to cytoplasmic locations such as endocytic vesicles, also called beta-arrestin signalosomes. Acts as a signaling scaffold for the AKT1 pathway. GPCRs for which the beta-arrestin-mediated signaling relies on both ARRB1 and ARRB2 (codependent regulation) include ADRB2, F2RL1 and PTH1R. For some GPCRs the beta-arrestin-mediated signaling relies on either ARRB1 or ARRB2 and is inhibited by the other respective beta-arrestin form (reciprocal regulation). Increases ERK1/2 signaling in AGTR1- and AVPR2-mediated activation (reciprocal regulation). Involved in CCR7-mediated ERK1/2 signaling involving ligand CCL19. Is involved in type-1A angiotensin II receptor/AGTR1-mediated ERK activity. Is involved in type-1A angiotensin II receptor/AGTR1-mediated MAPK10 activity. Is involved in dopamine-stimulated AKT1 activity in the striatum by disrupting the association of AKT1 with its negative regulator PP2A. Involved in AGTR1-mediated chemotaxis. Appears to function as signaling scaffold involved in regulation of MIP-1-beta-stimulated CCR5-dependent chemotaxis. Involved in attenuation of NF-kappa-B-dependent transcription in response to GPCR or cytokine stimulation by interacting with and stabilizing CHUK. Suppresses UV-induced NF-kappa-B-dependent activation by interacting with CHUK. The function is promoted by stimulation of ADRB2 and dephosphorylation of ARRB2. Involved in p53/TP53-mediated apoptosis by regulating MDM2 and reducing the MDM2-mediated degradation of p53/TP53. May serve as nuclear messenger for GPCRs. Upon stimulation of OR1D2, may be involved in regulation of gene expression during the early processes of fertilization. Also involved in regulation of receptors other than GPCRs. Involved in endocytosis of TGFBR2 and TGFBR3 and down-regulates TGF-beta signaling such as NF-kappa-B activation. Involved in endocytosis of low-density lipoprotein receptor/LDLR. Involved in endocytosis of smoothened homolog/Smo, which also requires GRK2. Involved in endocytosis of SLC9A5. Involved in endocytosis of ENG and subsequent TGF-beta-mediated ERK activation and migration of epithelial cells. Involved in Toll-like receptor and IL-1 receptor signaling through the interaction with TRAF6 which prevents TRAF6 autoubiquitination and oligomerization required for activation of NF-kappa-B and JUN. Involved in insulin resistance by acting as insulin-induced signaling scaffold for SRC, AKT1 and INSR. Involved in regulation of inhibitory signaling of natural killer cells by recruiting PTPN6 and PTPN11 to KIR2DL1. Involved in IL8-mediated granule release in neutrophils. Involved in the internalization of the atypical chemokine receptor ACKR3. Acts as an adapter protein coupling FFAR4 receptor to specific downstream signaling pathways, as well as mediating receptor endocytosis. During the activation step of NLRP3 inflammasome, directly associates with NLRP3 leading to inhibition of pro-inflammatory cytokine release and inhibition of inflammation. This Homo sapiens (Human) protein is Beta-arrestin-2 (ARRB2).